Reading from the N-terminus, the 52-residue chain is Large ribosomal subunit protein bL33 (52 aa).

It belongs to the bacterial ribosomal protein bL33 family.

The protein is Large ribosomal subunit protein bL33 (rpmG) of Chlamydia muridarum (strain MoPn / Nigg).